Reading from the N-terminus, the 94-residue chain is MSNEIVDELYKIILDRIEKRPTGSYTAEIVNKGKPYVARKVGEESVETIVASLAENKERFISEVADLIYHLLVLMALEGVTPEDIYRELERRRK.

Belongs to the PRA-PH family.

The protein resides in the cytoplasm. It catalyses the reaction 1-(5-phospho-beta-D-ribosyl)-ATP + H2O = 1-(5-phospho-beta-D-ribosyl)-5'-AMP + diphosphate + H(+). It functions in the pathway amino-acid biosynthesis; L-histidine biosynthesis; L-histidine from 5-phospho-alpha-D-ribose 1-diphosphate: step 2/9. The chain is Phosphoribosyl-ATP pyrophosphatase (hisE) from Saccharolobus solfataricus (strain ATCC 35092 / DSM 1617 / JCM 11322 / P2) (Sulfolobus solfataricus).